The following is a 238-amino-acid chain: Uridylate kinase (238 aa).

Position 12–15 (12–15 (KLSG)) interacts with ATP. Gly-54 lines the UMP pocket. The ATP site is built by Gly-55 and Arg-59. UMP contacts are provided by residues Asp-74 and 135–142 (TGNPFFTT). ATP is bound by residues Thr-162, Asn-163, Tyr-168, and Asp-171.

It belongs to the UMP kinase family. Homohexamer.

Its subcellular location is the cytoplasm. It carries out the reaction UMP + ATP = UDP + ADP. It participates in pyrimidine metabolism; CTP biosynthesis via de novo pathway; UDP from UMP (UMPK route): step 1/1. Its activity is regulated as follows. Inhibited by UTP. Its function is as follows. Catalyzes the reversible phosphorylation of UMP to UDP. The polypeptide is Uridylate kinase (Rhodopseudomonas palustris (strain BisB18)).